Consider the following 440-residue polypeptide: Chromosome partition protein MukF (440 aa).

The interval 208–236 is leucine-zipper; sequence LDETSGNLRELQDTLNAAGDKLQSQLLRI.

Belongs to the MukF family. Interacts, and probably forms a ternary complex, with MukE and MukB via its C-terminal region. The complex formation is stimulated by calcium or magnesium. It is required for an interaction between MukE and MukB.

It is found in the cytoplasm. The protein resides in the nucleoid. Functionally, involved in chromosome condensation, segregation and cell cycle progression. May participate in facilitating chromosome segregation by condensation DNA from both sides of a centrally located replisome during cell division. Not required for mini-F plasmid partitioning. Probably acts via its interaction with MukB and MukE. Overexpression results in anucleate cells. It has a calcium binding activity. The sequence is that of Chromosome partition protein MukF from Histophilus somni (strain 2336) (Haemophilus somnus).